We begin with the raw amino-acid sequence, 363 residues long: Aminomethyltransferase (363 aa).

The protein belongs to the GcvT family. The glycine cleavage system is composed of four proteins: P, T, L and H.

It catalyses the reaction N(6)-[(R)-S(8)-aminomethyldihydrolipoyl]-L-lysyl-[protein] + (6S)-5,6,7,8-tetrahydrofolate = N(6)-[(R)-dihydrolipoyl]-L-lysyl-[protein] + (6R)-5,10-methylene-5,6,7,8-tetrahydrofolate + NH4(+). Its function is as follows. The glycine cleavage system catalyzes the degradation of glycine. This is Aminomethyltransferase from Nitrosomonas europaea (strain ATCC 19718 / CIP 103999 / KCTC 2705 / NBRC 14298).